The primary structure comprises 94 residues: Putative pterin-4-alpha-carbinolamine dehydratase (94 aa).

This sequence belongs to the pterin-4-alpha-carbinolamine dehydratase family.

The enzyme catalyses (4aS,6R)-4a-hydroxy-L-erythro-5,6,7,8-tetrahydrobiopterin = (6R)-L-erythro-6,7-dihydrobiopterin + H2O. The protein is Putative pterin-4-alpha-carbinolamine dehydratase of Mycobacterium sp. (strain KMS).